Here is a 226-residue protein sequence, read N- to C-terminus: MLTWLSRTDFDFPPLDKALQEPNGLLAAGGDLNPQRLVAAYRHGCFPWYQDGQPILWWSPDPRTVLFPDELHVSRSLAKCLRQQRFEVTFNRDFRAVIQACAAPRDYADGTWITTPMQLAYQELHLRGIAHSVEVWQERQLVGGLYGLAMGRLFFGESMFSRADNASKVGFVTLVRHLRDAGFVLIDCQMPTRHLHSLGARAISRGEFADYLQRYRDQPPTGDLDF.

It belongs to the L/F-transferase family.

Its subcellular location is the cytoplasm. It catalyses the reaction N-terminal L-lysyl-[protein] + L-leucyl-tRNA(Leu) = N-terminal L-leucyl-L-lysyl-[protein] + tRNA(Leu) + H(+). The catalysed reaction is N-terminal L-arginyl-[protein] + L-leucyl-tRNA(Leu) = N-terminal L-leucyl-L-arginyl-[protein] + tRNA(Leu) + H(+). The enzyme catalyses L-phenylalanyl-tRNA(Phe) + an N-terminal L-alpha-aminoacyl-[protein] = an N-terminal L-phenylalanyl-L-alpha-aminoacyl-[protein] + tRNA(Phe). In terms of biological role, functions in the N-end rule pathway of protein degradation where it conjugates Leu, Phe and, less efficiently, Met from aminoacyl-tRNAs to the N-termini of proteins containing an N-terminal arginine or lysine. The chain is Leucyl/phenylalanyl-tRNA--protein transferase from Pseudomonas aeruginosa (strain LESB58).